A 192-amino-acid polypeptide reads, in one-letter code: Shikimate kinase (192 aa).

Position 15 to 20 (15 to 20 (GAGKTT)) interacts with ATP. Residue threonine 19 coordinates Mg(2+). Residues aspartate 37, arginine 61, and glycine 83 each coordinate substrate. An ATP-binding site is contributed by arginine 121. Arginine 140 lines the substrate pocket.

It belongs to the shikimate kinase family. In terms of assembly, monomer. The cofactor is Mg(2+).

It is found in the cytoplasm. It catalyses the reaction shikimate + ATP = 3-phosphoshikimate + ADP + H(+). It functions in the pathway metabolic intermediate biosynthesis; chorismate biosynthesis; chorismate from D-erythrose 4-phosphate and phosphoenolpyruvate: step 5/7. Functionally, catalyzes the specific phosphorylation of the 3-hydroxyl group of shikimic acid using ATP as a cosubstrate. This Cupriavidus pinatubonensis (strain JMP 134 / LMG 1197) (Cupriavidus necator (strain JMP 134)) protein is Shikimate kinase.